The chain runs to 189 residues: Ribosome maturation factor RimM (189 aa).

The PRC barrel domain maps to aspartate 110–phenylalanine 189.

Belongs to the RimM family. Binds ribosomal protein uS19.

Its subcellular location is the cytoplasm. Functionally, an accessory protein needed during the final step in the assembly of 30S ribosomal subunit, possibly for assembly of the head region. Essential for efficient processing of 16S rRNA. May be needed both before and after RbfA during the maturation of 16S rRNA. It has affinity for free ribosomal 30S subunits but not for 70S ribosomes. This chain is Ribosome maturation factor RimM, found in Blochmanniella pennsylvanica (strain BPEN).